The chain runs to 724 residues: Tripartite terminase subunit 1 (724 aa).

Residues 175 to 203 form a C3H1-type zinc finger; that stretch reads CAVCFEELCVTANQGEATHRRLLGCVCDH. Residues 410 to 445 are disordered; the sequence is GGDDADADGGAAGGADAGDGGVGDEDGPGAPPPADA. Gly residues predominate over residues 419–430; sequence GAAGGADAGDGG. Residue 652–659 coordinates ATP; that stretch reads FRSVFHCG.

It belongs to the herpesviridae TRM1 protein family. As to quaternary structure, associates with TRM2 and TRM3 to form the tripartite terminase complex. Interacts with portal protein.

Its subcellular location is the host nucleus. In terms of biological role, component of the molecular motor that translocates viral genomic DNA in empty capsid during DNA packaging. Forms a tripartite terminase complex together with TRM2 and TRM3 in the host cytoplasm. Once the complex reaches the host nucleus, it interacts with the capsid portal vertex. This portal forms a ring in which genomic DNA is translocated into the capsid. TRM1 carries an endonuclease activity that plays an important role for the cleavage of concatemeric viral DNA into unit length genomes. This chain is Tripartite terminase subunit 1, found in Suid herpesvirus 1 (strain Indiana-Funkhauser / Becker) (SuHV-1).